A 315-amino-acid chain; its full sequence is tRNA uridine(34) hydroxylase (315 aa).

In terms of domain architecture, Rhodanese spans 122–223; the sequence is SDPDVLVIDT…YLEQIPQPES (102 aa). The Cysteine persulfide intermediate role is filled by cysteine 183.

This sequence belongs to the TrhO family.

The enzyme catalyses uridine(34) in tRNA + AH2 + O2 = 5-hydroxyuridine(34) in tRNA + A + H2O. Functionally, catalyzes oxygen-dependent 5-hydroxyuridine (ho5U) modification at position 34 in tRNAs. This chain is tRNA uridine(34) hydroxylase, found in Caulobacter vibrioides (strain ATCC 19089 / CIP 103742 / CB 15) (Caulobacter crescentus).